The chain runs to 162 residues: Sorting nexin-12 (162 aa).

The disordered stretch occupies residues 1–20; it reads MSDTAVADTRRLNSKPQDLT. At Ser-2 the chain carries N-acetylserine. Tyr-23 carries the post-translational modification Phosphotyrosine. The 125-residue stretch at 28–152 folds into the PX domain; the sequence is NFLEIDIFNP…HMFLQEEAID (125 aa). Positions 71, 73, 96, and 119 each coordinate a 1,2-diacyl-sn-glycero-3-phospho-(1D-myo-inositol-3-phosphate). Phosphoserine is present on Ser-73.

The protein belongs to the sorting nexin family.

It is found in the membrane. Functionally, may be involved in several stages of intracellular trafficking. This Homo sapiens (Human) protein is Sorting nexin-12 (SNX12).